The sequence spans 63 residues: 2-hydroxymuconate tautomerase (63 aa).

P2 serves as the catalytic Proton acceptor; via imino nitrogen.

This sequence belongs to the 4-oxalocrotonate tautomerase family. As to quaternary structure, homohexamer.

It catalyses the reaction (2Z,4E)-2-hydroxyhexa-2,4-dienedioate = (3E)-2-oxohex-3-enedioate. It functions in the pathway xenobiotic degradation; toluene degradation. The protein operates within xenobiotic degradation; xylene degradation. Functionally, catalyzes the ketonization of 2-hydroxymuconate stereoselectively to yield 2-oxo-3-hexenedioate. The polypeptide is 2-hydroxymuconate tautomerase (xylH) (Pseudomonas putida (Arthrobacter siderocapsulatus)).